The chain runs to 125 residues: Meiotically up-regulated gene 112 protein (125 aa).

The protein resides in the golgi apparatus. Its function is as follows. Has a role in meiosis. In Schizosaccharomyces pombe (strain 972 / ATCC 24843) (Fission yeast), this protein is Meiotically up-regulated gene 112 protein (mug112).